The sequence spans 326 residues: Mitochondrial glycine transporter (326 aa).

3 Solcar repeats span residues 45 to 134 (HPVI…SKQY), 141 to 225 (PTAL…TRAT), and 237 to 321 (LMPL…MMAK). 6 helical membrane passes run 51 to 76 (FLCGSISGTCSTLLFQPLDLLKTRLQ), 109 to 135 (GMSPSIVRCVPGVGIYFGTLYSSKQYF), 147 to 172 (VILGMGSRSVAGVCMSPITVVKTRYE), 200 to 223 (GLTATLLRDAPFSGLYLMFYSQTR), 241 to 267 (VNFSCGVFAGILASLVTQPADVIKTHM), and 296 to 314 (GSVPRALRRTLMAAMAWTV).

It belongs to the mitochondrial carrier (TC 2.A.29) family. SLC25A38 subfamily.

The protein resides in the mitochondrion inner membrane. The enzyme catalyses glycine(in) = glycine(out). In terms of biological role, mitochondrial glycine transporter that imports glycine into the mitochondrial matrix. Plays an important role in providing glycine for the first enzymatic step in heme biosynthesis, the condensation of glycine with succinyl-CoA to produce 5-aminolevulinate (ALA) in the mitochondrial matrix. Required during erythropoiesis. Plays a role as pro-apoptotic protein that induces caspase-dependent apoptosis. This Rattus norvegicus (Rat) protein is Mitochondrial glycine transporter.